The chain runs to 527 residues: Cytochrome P450 monooxygenase aba2 (527 aa).

A helical membrane pass occupies residues Thr26 to Phe46. N-linked (GlcNAc...) asparagine glycans are attached at residues Asn189, Asn420, and Asn448. Cys460 contributes to the heme binding site. N-linked (GlcNAc...) asparagine glycosylation is present at Asn464.

Belongs to the cytochrome P450 family. Heme serves as cofactor.

It is found in the membrane. Its pathway is hormone biosynthesis. Cytochrome P450 monooxygenase; part of the gene cluster that mediates the biosynthesis of abscisic acid (ABA), a phytohormone that acts antagonistically toward salicylic acid (SA), jasmonic acid (JA) and ethylene (ETH) signaling, to impede plant defense responses. The first step of the pathway catalyzes the reaction from farnesyl diphosphate to alpha-ionylideneethane performed by the alpha-ionylideneethane synthase aba3 via a three-step reaction mechanism involving 2 neutral intermediates, beta-farnesene and allofarnesene. The cytochrome P450 monooxygenase aba1 might then be involved in the conversion of alpha-ionylideneethane to alpha-ionylideneacetic acid. Alpha-ionylideneacetic acid is further converted to abscisic acid in 2 steps involving the cytochrome P450 monooxygenase aba2 and the short-chain dehydrogenase/reductase aba4, via the intermediates 1'-deoxy-ABA or 1',4'-trans-diol-ABA, depending on the order of action of these 2 enzymes. Aba2 is responsible for the hydroxylation of carbon atom C-1' and aba4 might be involved in the oxidation of the C-4' carbon atom. The protein is Cytochrome P450 monooxygenase aba2 (aba2) of Botryotinia fuckeliana (strain B05.10) (Noble rot fungus).